A 155-amino-acid chain; its full sequence is SsrA-binding protein (155 aa).

Belongs to the SmpB family.

It localises to the cytoplasm. Required for rescue of stalled ribosomes mediated by trans-translation. Binds to transfer-messenger RNA (tmRNA), required for stable association of tmRNA with ribosomes. tmRNA and SmpB together mimic tRNA shape, replacing the anticodon stem-loop with SmpB. tmRNA is encoded by the ssrA gene; the 2 termini fold to resemble tRNA(Ala) and it encodes a 'tag peptide', a short internal open reading frame. During trans-translation Ala-aminoacylated tmRNA acts like a tRNA, entering the A-site of stalled ribosomes, displacing the stalled mRNA. The ribosome then switches to translate the ORF on the tmRNA; the nascent peptide is terminated with the 'tag peptide' encoded by the tmRNA and targeted for degradation. The ribosome is freed to recommence translation, which seems to be the essential function of trans-translation. This chain is SsrA-binding protein, found in Streptococcus pneumoniae (strain Hungary19A-6).